The sequence spans 477 residues: MNVLFISSEVAPFSKTGGLGDVAGALPAALASLGHDVKVITPRYRDLRGAERLEPTGQSLLLRFPFGELSGPILSARVSERLEVLFLENAFLFGNRHGLYGDAGGAFADNHRRFAYLSVGALQAAQRLRFIPDIIHANDWQTGLVPVALRRGFQTGPLAHAKSVFTIHNLAYQGQFPKDVMGDLALPWDLFTAHDGLEFHDTVNFLKAGLVFSDALTTVSPTYAREIQTPEQGYGLDGLLRHRAHRLHGILNGVDTHEWNPEDDAFLPARYGLKDLSGKAVCKRELLARFGLEDGPAPVFGFVSRLAWQKGMDLLLEALPAALHADIRVVGVGSGEGPLEEGLLALQSRYPKQVGVHIGFDPGLSHLVEAGADFFLMPSRYEPCGLNQMYSLRYGTVPIVRATGGLVDTVEGGLDGNGILFEAFHKSALLAAIRRALALYADPSRLDEFRRRGMEKDFSWGASGRRYEALFHDLVAE.

An ADP-alpha-D-glucose-binding site is contributed by Lys15.

Belongs to the glycosyltransferase 1 family. Bacterial/plant glycogen synthase subfamily.

It catalyses the reaction [(1-&gt;4)-alpha-D-glucosyl](n) + ADP-alpha-D-glucose = [(1-&gt;4)-alpha-D-glucosyl](n+1) + ADP + H(+). The protein operates within glycan biosynthesis; glycogen biosynthesis. In terms of biological role, synthesizes alpha-1,4-glucan chains using ADP-glucose. The protein is Glycogen synthase of Myxococcus xanthus (strain DK1622).